A 156-amino-acid polypeptide reads, in one-letter code: Iron sulfur cluster assembly protein 2, mitochondrial (156 aa).

The transit peptide at Met1–Leu26 directs the protein to the mitochondrion.

Belongs to the NifU family. In terms of assembly, component of the core Fe-S cluster (ISC) assembly machinery. Interacts with frataxin. Interacts with the mitochondrial co-chaperones JAC1 and SSQ1. Interacts with NFS1. Interacts with ferredoxin YAH1; interacts with the reduced form. Requires [2Fe-2S] cluster as cofactor.

Its subcellular location is the mitochondrion matrix. Its pathway is cofactor biosynthesis; iron-sulfur cluster biosynthesis. Scaffold protein for the de novo synthesis of iron-sulfur (Fe-S) clusters within mitochondria, which is required for maturation of both mitochondrial and cytoplasmic [2Fe-2S] and [4Fe-4S] proteins. First, a [2Fe-2S] cluster is transiently assembled on the scaffold proteins ISU1 and ISU2. In a second step, the cluster is released from ISU1/ISU2, transferred to glutaredoxin GRX5, followed by the formation of mitochondrial [2Fe-2S] proteins, the synthesis of [4Fe-4S] clusters and their target-specific insertion into the recipient apoproteins. Cluster assembly on ISU1/ISU2 depends on the function of the cysteine desulfurase complex NFS1-ISD11, which serves as the sulfur donor for cluster synthesis, the iron-binding protein frataxin (YFH1) as the putative iron donor, and the electron transfer chain comprised of ferredoxin reductase ARH1 and ferredoxin YAH1, which receive their electrons from NADH. Fe-S cluster release from ISU1/ISU2 is achieved by interaction with the Hsp70 chaperone SSQ1, assisted by the DnaJ-like co-chaperone JAC1 and the nucleotide exchange factor MGE1. ISU1 is the major isoform in yeast, while ISU2 is not detectable in cells grown to stationary phase. Also involved in production of a sulfur precursor required for thiolation of cytoplasmic tRNAs. This is Iron sulfur cluster assembly protein 2, mitochondrial from Saccharomyces cerevisiae (strain ATCC 204508 / S288c) (Baker's yeast).